We begin with the raw amino-acid sequence, 294 residues long: RNA polymerase sigma-K factor (294 aa).

A propeptide spanning residues 1 to 20 (MVTGVFAALGFVVKELVFLV) is cleaved from the precursor. Residues 1–156 (MVTGVFAALG…VNNCFFIFKS (156 aa)) are encoded by spoIVCB. The Polymerase core binding signature appears at 79 to 92 (DLISIGTIGLIKGI). A not present in recombined mature factor region spans residues 114–165 (EIVITKGGCIHPSLIRFNIYGVRIHNGNFFHDKVNNCFFIFKSMPPLFVMNN). Positions 157–294 (MPPLFVMNNE…KEKRKKAKGK (138 aa)) are encoded by spoIIIC. The segment at residues 251–270 (QREIAKELGISRSYVSRIEK) is a DNA-binding region (H-T-H motif).

This sequence belongs to the sigma-70 factor family.

In terms of biological role, sigma factors are initiation factors that promote the attachment of RNA polymerase to specific initiation sites and are then released. This sigma factor is responsible for the expression of sporulation specific genes in the mother cell. This Bacillus subtilis (strain 168) protein is RNA polymerase sigma-K factor (sigK).